We begin with the raw amino-acid sequence, 102 residues long: Small ribosomal subunit protein uS10 (102 aa).

It belongs to the universal ribosomal protein uS10 family. In terms of assembly, part of the 30S ribosomal subunit.

In terms of biological role, involved in the binding of tRNA to the ribosomes. The polypeptide is Small ribosomal subunit protein uS10 (Methanococcus maripaludis (strain C6 / ATCC BAA-1332)).